The following is a 177-amino-acid chain: UBA-like domain-containing protein 1 (177 aa).

A disordered region spans residues 89 to 177 (ESFHSGGSGS…RAHPAMEAER (89 aa)). Over residues 112 to 138 (PHAATSSSAASSWPTAASPPGGPQHHQ) the composition is skewed to low complexity. A compositionally biased stretch (pro residues) spans 139–151 (PQPPLWTPTPPSP). Residues 167–177 (PRAHPAMEAER) show a composition bias toward basic and acidic residues.

The protein belongs to the UBALD family.

This is UBA-like domain-containing protein 1 (UBALD1) from Homo sapiens (Human).